The following is a 202-amino-acid chain: uncharacterized protein (202 aa).

The segment at 179–202 is disordered; that stretch reads FDEQDSTPELPPNYLLDSQKKSQG.

This is an uncharacterized protein from Haemophilus influenzae (strain ATCC 51907 / DSM 11121 / KW20 / Rd).